Reading from the N-terminus, the 233-residue chain is Demethylmenaquinone methyltransferase (233 aa).

S-adenosyl-L-methionine is bound by residues Thr58, Asp79, and 106–107 (NA).

It belongs to the class I-like SAM-binding methyltransferase superfamily. MenG/UbiE family.

It catalyses the reaction a 2-demethylmenaquinol + S-adenosyl-L-methionine = a menaquinol + S-adenosyl-L-homocysteine + H(+). The protein operates within quinol/quinone metabolism; menaquinone biosynthesis; menaquinol from 1,4-dihydroxy-2-naphthoate: step 2/2. Its function is as follows. Methyltransferase required for the conversion of demethylmenaquinol (DMKH2) to menaquinol (MKH2). The sequence is that of Demethylmenaquinone methyltransferase from Bacillus velezensis (strain DSM 23117 / BGSC 10A6 / LMG 26770 / FZB42) (Bacillus amyloliquefaciens subsp. plantarum).